A 424-amino-acid chain; its full sequence is Anaerobic glycerol-3-phosphate dehydrogenase subunit B (424 aa).

Belongs to the anaerobic G-3-P dehydrogenase subunit B family. Composed of a catalytic GlpA/B dimer and of membrane bound GlpC. The cofactor is FMN.

It catalyses the reaction a quinone + sn-glycerol 3-phosphate = dihydroxyacetone phosphate + a quinol. It participates in polyol metabolism; glycerol degradation via glycerol kinase pathway; glycerone phosphate from sn-glycerol 3-phosphate (anaerobic route): step 1/1. In terms of biological role, conversion of glycerol 3-phosphate to dihydroxyacetone. Uses fumarate or nitrate as electron acceptor. This Yersinia pestis bv. Antiqua (strain Antiqua) protein is Anaerobic glycerol-3-phosphate dehydrogenase subunit B.